A 512-amino-acid chain; its full sequence is Hyaluronidase PH-20 (512 aa).

The signal sequence occupies residues M1 to T35. 2 cysteine pairs are disulfide-bonded: C60–C351 and C223–C237. N-linked (GlcNAc...) asparagine glycosylation occurs at N63. E147 acts as the Proton donor in catalysis. Residues N165 and N179 are each glycosylated (N-linked (GlcNAc...) asparagine). N368 carries an N-linked (GlcNAc...) asparagine glycan. Intrachain disulfides connect C376–C387, C381–C435, and C437–C464. Residue N408 is glycosylated (N-linked (GlcNAc...) asparagine).

It belongs to the glycosyl hydrolase 56 family.

The protein localises to the cell membrane. It catalyses the reaction Random hydrolysis of (1-&gt;4)-linkages between N-acetyl-beta-D-glucosamine and D-glucuronate residues in hyaluronate.. Involved in sperm-egg adhesion. Upon fertilization sperm must first penetrate a layer of cumulus cells that surrounds the egg before reaching the zona pellucida. The cumulus cells are embedded in a matrix containing hyaluronic acid which is formed prior to ovulation. This protein aids in penetrating the layer of cumulus cells by digesting hyaluronic acid. This chain is Hyaluronidase PH-20 (Spam1), found in Rattus norvegicus (Rat).